Reading from the N-terminus, the 389-residue chain is MTKLWVNFFSQKLLRLLIPSIIVVFAFAALFAIYSPIQLGGINFYKRTNLFTVEELGEKELELSKTVTIDIYRKAMCMDDLEQSRKCTTFGLDPPISAHLFYTYNRDTGMNRVARQWNRRIPRVFHTIKGSNFIELSQFTAFEVELRVSHPNWAFVSWSHDDLNELVDKSYHNLHNAWSQLSREAKDQWGFLLGLYEYGGVWMSRSLQLKKNIDKFVYAAELSVKQFTENITSSTVEEFQPIFMAPKSLQYDFMIATPKHPFVLSLINELCKSEVLLKILSKRPYHGLDAAEALFAENRESITIREQEFFVNTYIDDGKVFVKNNPHIIFIPTEAFASTWDFLPSEESSEMCFADSPLFDPDYCISHSSKPDGNELAIYWSNSFDLITA.

Residues 1 to 16 (MTKLWVNFFSQKLLRL) are Cytoplasmic-facing. Residues 17–37 (LIPSIIVVFAFAALFAIYSPI) form a helical membrane-spanning segment. The Lumenal segment spans residues 38–389 (QLGGINFYKR…WSNSFDLITA (352 aa)).

It localises to the endoplasmic reticulum membrane. It is found in the golgi apparatus membrane. Functionally, involved in cell wall biogenesis. Has a role in the addition of Gal-beta1,3 moeities to galactomannans and their subsequent pyruvylation. Has a role in meiosis. The polypeptide is Pyruvylated Gal-beta-1,3-epitope synthesis protein 2 (pvg2) (Schizosaccharomyces pombe (strain 972 / ATCC 24843) (Fission yeast)).